Here is a 570-residue protein sequence, read N- to C-terminus: Grayanic acid biosynthesis cluster cytochrome P450 monooxygenase (570 aa).

The chain crosses the membrane as a helical span at residues 9-29; it reads ILTIFWLPIAAAXLYGAGLAI. Residue N191 is glycosylated (N-linked (GlcNAc...) asparagine). C510 is a heme binding site.

This sequence belongs to the cytochrome P450 family. The cofactor is heme.

It localises to the membrane. Its pathway is secondary metabolite biosynthesis. Functionally, non-reducing polyketide synthase; part of the gene cluster that mediates the biosynthesis of orcinol depsidone grayanic acid (GRA), the only major secondary metabolite known in C.grayi. The first step consists in the ring and depside synthesis by PKS16 leading to 4-O-demethylsphaerophorin, involving different orcinol-like rings, one with acetyl CoA and the other with octanoyl CoA as the starter. Further depsidone formation by the GRA cluster-specific cytochrome P450 leads to 4-O-demethylgrayanic acid. Finally, the cluster specific O-methyltransferase probably converts the 4-O-demethylgrayanic acid into grayanic acid. This Cladonia grayi (Gray's cup lichen) protein is Grayanic acid biosynthesis cluster cytochrome P450 monooxygenase.